An 87-amino-acid polypeptide reads, in one-letter code: uncharacterized protein (87 aa).

A run of 2 helical transmembrane segments spans residues Leu-25–Gly-45 and Tyr-53–Phe-73.

The protein resides in the cell membrane. This is an uncharacterized protein from Paracoccus denitrificans.